Consider the following 195-residue polypeptide: FMN-dependent NADH:quinone oxidoreductase (195 aa).

Residues S10, 16–18 (SVS), and 88–91 (MYNF) each bind FMN.

The protein belongs to the azoreductase type 1 family. In terms of assembly, homodimer. FMN is required as a cofactor.

The enzyme catalyses 2 a quinone + NADH + H(+) = 2 a 1,4-benzosemiquinone + NAD(+). It carries out the reaction N,N-dimethyl-1,4-phenylenediamine + anthranilate + 2 NAD(+) = 2-(4-dimethylaminophenyl)diazenylbenzoate + 2 NADH + 2 H(+). In terms of biological role, quinone reductase that provides resistance to thiol-specific stress caused by electrophilic quinones. Functionally, also exhibits azoreductase activity. Catalyzes the reductive cleavage of the azo bond in aromatic azo compounds to the corresponding amines. The protein is FMN-dependent NADH:quinone oxidoreductase of Francisella philomiragia subsp. philomiragia (strain ATCC 25017 / CCUG 19701 / FSC 153 / O#319-036).